A 536-amino-acid polypeptide reads, in one-letter code: ATP synthase subunit beta (536 aa).

A disordered region spans residues 1–57 (MVKAVSSSKGAAKVEQKKSAARSGVKKNASKSQASLQDTSSPLKTSSKNAHAKKDVQ). Residues 30-49 (SKSQASLQDTSSPLKTSSKN) are compositionally biased toward polar residues. ATP is bound at residue 208–215 (GGAGVGKT).

This sequence belongs to the ATPase alpha/beta chains family. In terms of assembly, F-type ATPases have 2 components, CF(1) - the catalytic core - and CF(0) - the membrane proton channel. CF(1) has five subunits: alpha(3), beta(3), gamma(1), delta(1), epsilon(1). CF(0) has three main subunits: a(1), b(2) and c(9-12). The alpha and beta chains form an alternating ring which encloses part of the gamma chain. CF(1) is attached to CF(0) by a central stalk formed by the gamma and epsilon chains, while a peripheral stalk is formed by the delta and b chains.

The protein localises to the cell inner membrane. It catalyses the reaction ATP + H2O + 4 H(+)(in) = ADP + phosphate + 5 H(+)(out). Produces ATP from ADP in the presence of a proton gradient across the membrane. The catalytic sites are hosted primarily by the beta subunits. This is ATP synthase subunit beta from Bartonella quintana (strain Toulouse) (Rochalimaea quintana).